The sequence spans 134 residues: Protein NrdI (134 aa).

The protein belongs to the NrdI family.

Functionally, probably involved in ribonucleotide reductase function. The protein is Protein NrdI of Serratia proteamaculans (strain 568).